The primary structure comprises 419 residues: Tol-Pal system protein TolB (419 aa).

The N-terminal stretch at 1–19 (MFNRIISLFLLLFTGQVIA) is a signal peptide.

Belongs to the TolB family. As to quaternary structure, the Tol-Pal system is composed of five core proteins: the inner membrane proteins TolA, TolQ and TolR, the periplasmic protein TolB and the outer membrane protein Pal. They form a network linking the inner and outer membranes and the peptidoglycan layer.

It localises to the periplasm. Its function is as follows. Part of the Tol-Pal system, which plays a role in outer membrane invagination during cell division and is important for maintaining outer membrane integrity. The sequence is that of Tol-Pal system protein TolB from Legionella pneumophila subsp. pneumophila (strain Philadelphia 1 / ATCC 33152 / DSM 7513).